The following is a 381-amino-acid chain: Alcohol dehydrogenase class-3 (381 aa).

Position 49 (Cys49) interacts with Zn(2+). His50 contacts NAD(+). An alcohol is bound by residues Thr51 and His71. His71, Glu72, Cys101, Cys104, Cys107, Cys115, and Cys179 together coordinate Zn(2+). NAD(+) contacts are provided by residues 204–209, Asp228, Lys233, Ile274, 297–299, 322–324, and Arg374; these read GLGTVG, VGV, and TAF.

It belongs to the zinc-containing alcohol dehydrogenase family. Class-III subfamily. As to quaternary structure, homodimer. Zn(2+) serves as cofactor.

The protein resides in the cytoplasm. The enzyme catalyses a primary alcohol + NAD(+) = an aldehyde + NADH + H(+). It carries out the reaction a secondary alcohol + NAD(+) = a ketone + NADH + H(+). The catalysed reaction is S-(hydroxymethyl)glutathione + NADP(+) = S-formylglutathione + NADPH + H(+). It catalyses the reaction S-(hydroxymethyl)glutathione + NAD(+) = S-formylglutathione + NADH + H(+). In Oryza sativa subsp. japonica (Rice), this protein is Alcohol dehydrogenase class-3.